The primary structure comprises 245 residues: MNKNIKYSQNFLTSEKVLNQIIKQLNLKETDTVYEIGTGKGHLTTKLAKISKQVTSIELDSHLFNLSSEKLKLNTRVTLIHQDILQFQFPNKQRYKIVGSIPYHLSTQIIKKVVFESHASDIYLIVEEGFYKRTLDIHRTLGLLLHTQVSIQQLLKLPAECFHPKPKVNSVLIKLTRHTTDVPDKYWKLYTYFVSKWVNREYRQLFTKNQFHQAMKHAKVNNLSTVTYEQVLSIFNSYLLFNGRK.

6 residues coordinate S-adenosyl-L-methionine: Asn-10, Leu-12, Gly-37, Glu-58, Asp-83, and Ser-100.

The protein belongs to the class I-like SAM-binding methyltransferase superfamily. rRNA adenine N(6)-methyltransferase family.

It catalyses the reaction adenosine(2085) in 23S rRNA + 2 S-adenosyl-L-methionine = N(6)-dimethyladenosine(2085) in 23S rRNA + 2 S-adenosyl-L-homocysteine + 2 H(+). In terms of biological role, this protein produces a dimethylation of the adenine residue at position 2085 in 23S rRNA, resulting in reduced affinity between ribosomes and macrolide-lincosamide-streptogramin B antibiotics. This chain is rRNA adenine N-6-methyltransferase (ermBP), found in Clostridium perfringens.